Here is a 510-residue protein sequence, read N- to C-terminus: Chromosomal replication initiator protein DnaA (510 aa).

The segment at 1-87 is domain I, interacts with DnaA modulators; the sequence is MSVELWQQCV…IGSRRSSAPR (87 aa). Positions 87–173 are domain II; that stretch reads RAAPNAPVSA…QVEGALKHTS (87 aa). The interval 140–160 is disordered; sequence DSFDAMAEPASAPASSGRAEQ. Positions 144–157 are enriched in low complexity; it reads AMAEPASAPASSGR. A domain III, AAA+ region region spans residues 174–390; it reads YLNRTFTFDT…GALKRVIAHS (217 aa). G218, G220, K221, and T222 together coordinate ATP. The segment at 391–510 is domain IV, binds dsDNA; the sequence is HFMGRDITIE…YKNLLRTLTT (120 aa).

This sequence belongs to the DnaA family. As to quaternary structure, oligomerizes as a right-handed, spiral filament on DNA at oriC.

It localises to the cytoplasm. In terms of biological role, plays an essential role in the initiation and regulation of chromosomal replication. ATP-DnaA binds to the origin of replication (oriC) to initiate formation of the DNA replication initiation complex once per cell cycle. Binds the DnaA box (a 9 base pair repeat at the origin) and separates the double-stranded (ds)DNA. Forms a right-handed helical filament on oriC DNA; dsDNA binds to the exterior of the filament while single-stranded (ss)DNA is stabiized in the filament's interior. The ATP-DnaA-oriC complex binds and stabilizes one strand of the AT-rich DNA unwinding element (DUE), permitting loading of DNA polymerase. After initiation quickly degrades to an ADP-DnaA complex that is not apt for DNA replication. Binds acidic phospholipids. The sequence is that of Chromosomal replication initiator protein DnaA from Pseudomonas putida (strain GB-1).